Reading from the N-terminus, the 113-residue chain is uncharacterized protein (113 aa).

Disordered stretches follow at residues 1 to 22 (MGEH…PLAQ) and 90 to 113 (DGRH…SDDL). Positions 90 to 99 (DGRHTTESSF) are enriched in basic and acidic residues. Low complexity predominate over residues 100–113 (EHSSPSRSPQSDDL).

This is an uncharacterized protein from Mycobacterium tuberculosis (strain CDC 1551 / Oshkosh).